The primary structure comprises 251 residues: Octanoyltransferase (251 aa).

A BPL/LPL catalytic domain is found at 29-216 (GVIQDTLLLL…NFGFIFKEQV (188 aa)). Residues 74–81 (RGGDVTFH), 146–148 (AIG), and 159–161 (GFA) each bind substrate. C177 serves as the catalytic Acyl-thioester intermediate.

This sequence belongs to the LipB family.

The protein localises to the cytoplasm. It catalyses the reaction octanoyl-[ACP] + L-lysyl-[protein] = N(6)-octanoyl-L-lysyl-[protein] + holo-[ACP] + H(+). It functions in the pathway protein modification; protein lipoylation via endogenous pathway; protein N(6)-(lipoyl)lysine from octanoyl-[acyl-carrier-protein]: step 1/2. Catalyzes the transfer of endogenously produced octanoic acid from octanoyl-acyl-carrier-protein onto the lipoyl domains of lipoate-dependent enzymes. Lipoyl-ACP can also act as a substrate although octanoyl-ACP is likely to be the physiological substrate. This chain is Octanoyltransferase, found in Koribacter versatilis (strain Ellin345).